We begin with the raw amino-acid sequence, 374 residues long: Calcium/calmodulin-dependent protein kinase type 1 (374 aa).

In terms of domain architecture, Protein kinase spans 20–276 (YDFRDVLGTG…CEQALQHPWI (257 aa)). Residues 26–34 (LGTGAFSEV) and Lys49 contribute to the ATP site. A Glycyl lysine isopeptide (Lys-Gly) (interchain with G-Cter in ubiquitin) cross-link involves residue Lys59. Asp141 serves as the catalytic Proton acceptor. Phosphothreonine; by CaMKK1 and CaMKK2 is present on Thr177. The autoinhibitory domain stretch occupies residues 276 to 316 (IAGDTALDKNIHQSVSEQIKKNFAKSKWKQAFNATAVVRHM). The calmodulin-binding stretch occupies residues 296 to 317 (KNFAKSKWKQAFNATAVVRHMR). Positions 315–321 (HMRKLQL) match the Nuclear export signal motif.

It belongs to the protein kinase superfamily. CAMK Ser/Thr protein kinase family. CaMK subfamily. As to quaternary structure, monomer. Interacts with XPO1. Phosphorylated by CaMKK1 and CaMKK2 on Thr-177. Post-translationally, polybiquitinated by the E3 ubiquitin-protein ligase complex SCF(FBXL12), leading to proteasomal degradation. In terms of tissue distribution, ubiquitous.

The protein localises to the cytoplasm. The protein resides in the nucleus. The enzyme catalyses L-seryl-[protein] + ATP = O-phospho-L-seryl-[protein] + ADP + H(+). It carries out the reaction L-threonyl-[protein] + ATP = O-phospho-L-threonyl-[protein] + ADP + H(+). Its activity is regulated as follows. Activated by Ca(2+)/calmodulin. Binding of calmodulin results in conformational change that relieves intrasteric autoinhibition and allows phosphorylation of Thr-177 within the activation loop by CaMKK1 or CaMKK2. Phosphorylation of Thr-177 results in several fold increase in total activity. Unlike CaMK4, is unable to exhibit autonomous activity after Ca(2+)/calmodulin activation. Calcium/calmodulin-dependent protein kinase that operates in the calcium-triggered CaMKK-CaMK1 signaling cascade and, upon calcium influx, regulates transcription activators activity, cell cycle, hormone production, cell differentiation, actin filament organization and neurite outgrowth. Recognizes the substrate consensus sequence [MVLIF]-x-R-x(2)-[ST]-x(3)-[MVLIF]. Regulates axonal extension and growth cone motility in hippocampal and cerebellar nerve cells. Upon NMDA receptor-mediated Ca(2+) elevation, promotes dendritic growth in hippocampal neurons and is essential in synapses for full long-term potentiation (LTP) and ERK2-dependent translational activation. Downstream of NMDA receptors, promotes the formation of spines and synapses in hippocampal neurons by phosphorylating ARHGEF7/BETAPIX on 'Ser-673', which results in the enhancement of ARHGEF7 activity and activation of RAC1. Promotes neuronal differentiation and neurite outgrowth by activation and phosphorylation of MARK2 on 'Ser-91', 'Ser-92', 'Ser-93' and 'Ser-294'. Promotes nuclear export of HDAC5 and binding to 14-3-3 by phosphorylation of 'Ser-259' and 'Ser-498' in the regulation of muscle cell differentiation. Regulates NUMB-mediated endocytosis by phosphorylation of NUMB on 'Ser-276' and 'Ser-295'. Involved in the regulation of basal and estrogen-stimulated migration of medulloblastoma cells through ARHGEF7/BETAPIX phosphorylation. Is required for proper activation of cyclin-D1/CDK4 complex during G1 progression in diploid fibroblasts. Plays a role in K(+) and ANG2-mediated regulation of the aldosterone synthase (CYP11B2) to produce aldosterone in the adrenal cortex. Phosphorylates EIF4G3/eIF4GII. In vitro phosphorylates CREB1, ATF1, CFTR, MYL9 and SYN1/synapsin I. The chain is Calcium/calmodulin-dependent protein kinase type 1 (Camk1) from Mus musculus (Mouse).